Consider the following 228-residue polypeptide: Adapter protein MecA (228 aa).

Belongs to the MecA family. Homodimer.

Its function is as follows. Enables the recognition and targeting of unfolded and aggregated proteins to the ClpC protease or to other proteins involved in proteolysis. The chain is Adapter protein MecA from Lacticaseibacillus paracasei (strain ATCC 334 / BCRC 17002 / CCUG 31169 / CIP 107868 / KCTC 3260 / NRRL B-441) (Lactobacillus paracasei).